The sequence spans 416 residues: Signal recognition particle receptor FtsY (416 aa).

Basic residues predominate over residues 1 to 10; the sequence is MFSFFRRKKK. The segment at 1–24 is disordered; that stretch reads MFSFFRRKKKQETPALEEAQVQET. GTP contacts are provided by residues 224-231, 304-308, and 368-371; these read GINGAGKT, DTAGR, and TKLD.

It belongs to the GTP-binding SRP family. FtsY subfamily. As to quaternary structure, part of the signal recognition particle protein translocation system, which is composed of SRP and FtsY. SRP is a ribonucleoprotein composed of Ffh and a 4.5S RNA molecule. Requires Mg(2+) as cofactor.

It localises to the cell membrane. The protein resides in the cytoplasm. The enzyme catalyses GTP + H2O = GDP + phosphate + H(+). In terms of biological role, involved in targeting and insertion of nascent membrane proteins into the cytoplasmic membrane. Acts as a receptor for the complex formed by the signal recognition particle (SRP) and the ribosome-nascent chain (RNC). Interaction with SRP-RNC leads to the transfer of the RNC complex to the Sec translocase for insertion into the membrane, the hydrolysis of GTP by both Ffh and FtsY, and the dissociation of the SRP-FtsY complex into the individual components. The sequence is that of Signal recognition particle receptor FtsY from Neisseria gonorrhoeae.